A 98-amino-acid chain; its full sequence is MLCGGTSQPVDADEQIQKICDSMKPHAEAQAGKTFDVFVAKTYTTQCVPGTNYFIKVHVGGDEHVHLRVYKKLPCNGETLELSKMLQDKRHHDPLEYF.

The 80-residue stretch at 4-83 (GGTSQPVDAD…PCNGETLELS (80 aa)) folds into the Cystatin domain. Residues 46–50 (QCVPG) carry the Secondary area of contact motif.

It belongs to the cystatin family. In terms of tissue distribution, ubiquitously expressed in normal and lipopolysaccharide (LPS)-stimulated tissues including brain, eye, gullet, heart, liver, muscle, stomach, kidney, spleen, pyloric ceca, intestine and gill.

The protein localises to the cytoplasm. Greatly decreased inhibitory activity against papain protease by metal ions including ZnSO(4), CuSO(4), HgCl(2) and CoCl(2). Decreased inhibitory activity against papain protease by detergents including Tween 20, SDS and Brij 35. Functionally, thiol protease inhibitor. Has high papain, bovine cathepsin B and fish cathepsins F and X inhibitory activity and inhibits fish cathepsins L, S and K to a lesser extent in vitro. May be involved in innate immunity. The polypeptide is Cystatin-B (Paralichthys olivaceus (Bastard halibut)).